The following is a 304-amino-acid chain: Hairy/enhancer-of-split related with YRPW motif protein 1 (304 aa).

The disordered stretch occupies residues 1-52 (MKRAHPDYSSSDSELDETVEVEKESADENGNLSSALGSMSPTTSSQILARKR). Residues 28–47 (ENGNLSSALGSMSPTTSSQI) are compositionally biased toward polar residues. Residues 48 to 117 (LARKRRRGII…GGKGYFDAHA (70 aa)) form a transcriptional repression and interaction with NCOR1 and SIN3A region. The region spanning 49–104 (ARKRRRGIIEKRRRDRINNSLSELRRLVPSAFEKQGSAKLEKAEILQMTVDHLKML) is the bHLH domain. The 37-residue stretch at 122–158 (YRSLGFRECLAEVARYLSIIEGLDASDPLRVRLVSHL) folds into the Orange domain. Residues 191–234 (AHPLLLPQSGHGNTGTSASPTDPHHQGRLAAAHPEAPALRAPPS) form a disordered region. The span at 200-210 (GHGNTGTSASP) shows a compositional bias: polar residues. The span at 218–234 (RLAAAHPEAPALRAPPS) shows a compositional bias: low complexity.

Belongs to the HEY family. Self-associates. Interacts with HES1 and HEYL. Interacts with HDAC1, NCOR1 and SIN3A. Interacts with GATA4 and GATA6. Interacts with CCDC89/BOIP.

It localises to the nucleus. Its function is as follows. Transcriptional repressor which binds preferentially to the canonical E box sequence 5'-CACGTG-3'. Downstream effector of Notch signaling required for cardiovascular development. Specifically required for the Notch-induced endocardial epithelial to mesenchymal transition, which is itself criticial for cardiac valve and septum development. May be required in conjunction with HEY2 to specify arterial cell fate or identity. Promotes maintenance of neuronal precursor cells and glial versus neuronal fate specification. Represses transcription by the cardiac transcriptional activators GATA4 and GATA6 and by the neuronal bHLH factors ASCL1/MASH1 and NEUROD4/MATH3. The chain is Hairy/enhancer-of-split related with YRPW motif protein 1 (HEY1) from Canis lupus familiaris (Dog).